The chain runs to 181 residues: Oligoribonuclease (181 aa).

In terms of domain architecture, Exonuclease spans 8–171 (LIWLDLEMTG…DDIKESIAEL (164 aa)). Tyr129 is a catalytic residue.

This sequence belongs to the oligoribonuclease family.

The protein resides in the cytoplasm. Functionally, 3'-to-5' exoribonuclease specific for small oligoribonucleotides. This chain is Oligoribonuclease, found in Colwellia psychrerythraea (strain 34H / ATCC BAA-681) (Vibrio psychroerythus).